The chain runs to 432 residues: Lysosomal acid phosphatase (432 aa).

Positions 1 to 32 are cleaved as a signal peptide; sequence MADGSCLGSGPQLGLIALLVVLLFSAVPLAQS. The Lumenal portion of the chain corresponds to 33 to 384; it reads RELRFVTLVY…TTSFIMTEET (352 aa). His44 functions as the Nucleophile in the catalytic mechanism. N-linked (GlcNAc...) asparagine glycosylation is found at Asn94, Asn135, Asn179, Asn193, and Asn269. 3 disulfide bridges follow: Cys161-Cys373, Cys214-Cys313, and Cys348-Cys352. Asp290 acts as the Proton donor in catalysis. 2 N-linked (GlcNAc...) asparagine glycosylation sites follow: Asn325 and Asn334. A helical transmembrane segment spans residues 385–405; sequence IIGLTIGAIALFIIIVVLMLL. Residues 406–432 lie on the Cytoplasmic side of the membrane; sequence SCNEPKDDGYQHVSDEGDDHETKGLAM.

Belongs to the histidine acid phosphatase family. In terms of processing, the membrane-bound form is converted to the soluble form by sequential proteolytic processing. First, the C-terminal cytoplasmic tail is removed. Cleavage by a lysosomal protease releases the soluble form in the lysosome lumen.

Its subcellular location is the lysosome membrane. It localises to the lysosome lumen. The catalysed reaction is a phosphate monoester + H2O = an alcohol + phosphate. The protein is Lysosomal acid phosphatase (acp2) of Xenopus laevis (African clawed frog).